The sequence spans 319 residues: MYNPQLNKNGELSHLLSVEGLPKAILNQILDTAASFMEVSAREVKKVPLLRGKSVFNLFFENSTRTRTTFEIAAKRLSADVINLDINKSSASKGETLLDTIDNLCAMHANLFVVRHASSGAPYLIAEHLQRVGRDDIHVVNAGDGRHAHPTQGLLDMYTIRHYKKDFTQLRVAIVGDILHSRVARSDIHALTTLGVPEVRAIGPETLLPKHLDKLGVHVFHDMNEGLKDCDVVIMLRLQNERMTGALLPSAGEYFRHYGLTPQKLALAKPDAIVMHPGPMNRGVEIHSAVADGSQAVILPQVTFGIAVRMAVMSIVAGN.

Carbamoyl phosphate is bound by residues R65 and T66. K93 contacts L-aspartate. Carbamoyl phosphate contacts are provided by R115, H149, and Q152. R182 and R237 together coordinate L-aspartate. Residues G278 and P279 each contribute to the carbamoyl phosphate site.

This sequence belongs to the aspartate/ornithine carbamoyltransferase superfamily. ATCase family. As to quaternary structure, heterododecamer (2C3:3R2) of six catalytic PyrB chains organized as two trimers (C3), and six regulatory PyrI chains organized as three dimers (R2).

The enzyme catalyses carbamoyl phosphate + L-aspartate = N-carbamoyl-L-aspartate + phosphate + H(+). The protein operates within pyrimidine metabolism; UMP biosynthesis via de novo pathway; (S)-dihydroorotate from bicarbonate: step 2/3. Catalyzes the condensation of carbamoyl phosphate and aspartate to form carbamoyl aspartate and inorganic phosphate, the committed step in the de novo pyrimidine nucleotide biosynthesis pathway. In Dechloromonas aromatica (strain RCB), this protein is Aspartate carbamoyltransferase catalytic subunit.